We begin with the raw amino-acid sequence, 231 residues long: Ribosyldihydronicotinamide dehydrogenase [quinone] (231 aa).

FAD contacts are provided by residues His-12, Phe-18 to Ser-21, and Leu-104 to Phe-107. Residue Phe-127–Val-129 participates in substrate binding. FAD-binding positions include Thr-148–Gly-151 and Tyr-156. Zn(2+) is bound by residues His-174 and His-178. Glu-194 lines the FAD pocket. A Phosphoserine modification is found at Ser-197. Arg-201 serves as a coordination point for FAD. Cys-223 is a Zn(2+) binding site.

The protein belongs to the NAD(P)H dehydrogenase (quinone) family. As to quaternary structure, homodimer. The cofactor is Zn(2+). It depends on FAD as a cofactor.

It localises to the cytoplasm. It carries out the reaction 1-(beta-D-ribofuranosyl)-1,4-dihydronicotinamide + a quinone + H(+) = beta-nicotinamide D-riboside + a quinol. Functionally, the enzyme apparently serves as a quinone reductase in connection with conjugation reactions of hydroquinones involved in detoxification pathways as well as in biosynthetic processes such as the vitamin K-dependent gamma-carboxylation of glutamate residues in prothrombin synthesis. The polypeptide is Ribosyldihydronicotinamide dehydrogenase [quinone] (Nqo2) (Rattus norvegicus (Rat)).